The primary structure comprises 246 residues: Probable transcriptional regulatory protein CLD_1467 (246 aa).

This sequence belongs to the TACO1 family.

Its subcellular location is the cytoplasm. The protein is Probable transcriptional regulatory protein CLD_1467 of Clostridium botulinum (strain Okra / Type B1).